Reading from the N-terminus, the 311-residue chain is tRNA dimethylallyltransferase (311 aa).

An ATP-binding site is contributed by 13–20 (GPTASGKT). 15-20 (TASGKT) serves as a coordination point for substrate. Interaction with substrate tRNA stretches follow at residues 38 to 41 (DSMQ) and 166 to 170 (QRVLR).

It belongs to the IPP transferase family. As to quaternary structure, monomer. Mg(2+) serves as cofactor.

The catalysed reaction is adenosine(37) in tRNA + dimethylallyl diphosphate = N(6)-dimethylallyladenosine(37) in tRNA + diphosphate. In terms of biological role, catalyzes the transfer of a dimethylallyl group onto the adenine at position 37 in tRNAs that read codons beginning with uridine, leading to the formation of N6-(dimethylallyl)adenosine (i(6)A). This Staphylococcus aureus (strain MRSA252) protein is tRNA dimethylallyltransferase.